The chain runs to 400 residues: Enoyl-[acyl-carrier-protein] reductase [NADH] 1 (400 aa).

NAD(+) contacts are provided by residues 48–53, 74–75, 111–112, and 139–140; these read GASSGY, FE, DA, and LA. Tyr225 provides a ligand contact to substrate. Tyr235 functions as the Proton donor in the catalytic mechanism. Residues Lys244 and 273 to 275 contribute to the NAD(+) site; that span reads VVT.

It belongs to the TER reductase family. As to quaternary structure, monomer.

It catalyses the reaction a 2,3-saturated acyl-[ACP] + NAD(+) = a (2E)-enoyl-[ACP] + NADH + H(+). The protein operates within lipid metabolism; fatty acid biosynthesis. In terms of biological role, involved in the final reduction of the elongation cycle of fatty acid synthesis (FAS II). Catalyzes the reduction of a carbon-carbon double bond in an enoyl moiety that is covalently linked to an acyl carrier protein (ACP). The protein is Enoyl-[acyl-carrier-protein] reductase [NADH] 1 of Vibrio parahaemolyticus serotype O3:K6 (strain RIMD 2210633).